Consider the following 315-residue polypeptide: Gamma-hemolysin component C (315 aa).

The N-terminal stretch at 1 to 29 is a signal peptide; sequence MLKNKILTTTLSVSLLAPLANPLLENAKA.

It belongs to the aerolysin family. As to quaternary structure, toxicity requires sequential binding and synergistic association of a class S and a class F component which form heterooligomeric complexes. HlgC (class S) associates with HlgB (class F) thus forming an CB toxin.

Its function is as follows. Toxin that seems to act by forming pores in the membrane of the cell. Has a hemolytic and a leucotoxic activity. This Staphylococcus aureus (strain COL) protein is Gamma-hemolysin component C (hlgC).